The primary structure comprises 1670 residues: Collagen alpha-3(IV) chain (1670 aa).

An N-terminal signal peptide occupies residues 1-28 (MSARTAPRPQVLLLPLLLVLLAAAPAAS). Residues 29–42 (KGCVCKDKGQCFCD) form a 7S domain region. The segment at 43-1438 (GAKGEKGEKG…KGKRGDSGSP (1396 aa)) is triple-helical region. Disordered regions lie at residues 49 to 78 (GEKG…QGPK), 167 to 469 (LDAK…DGPK), and 502 to 1442 (GRQG…ATWT). Residues 176–200 (PGAPGPQGLPGPPGFPGPVGPPGPP) show a composition bias toward pro residues. The span at 202–212 (FFGFPGAMGPR) shows a compositional bias: low complexity. Residues 217-231 (HMGERVIGHKGERGV) show a composition bias toward basic and acidic residues. Low complexity predominate over residues 242-251 (GTVIVTLTGP). Asparagine 253 is a glycosylation site (N-linked (GlcNAc...) asparagine). The segment covering 253-266 (NRTDLKGEKGDKGA) has biased composition (basic and acidic residues). The span at 382–394 (SPGSSRPGLRGAP) shows a compositional bias: low complexity. Positions 402–411 (SKGERGRPGK) are enriched in basic and acidic residues. Residues 415-428 (GTPGSPGCAGSPGL) are compositionally biased toward low complexity. Composition is skewed to pro residues over residues 429 to 438 (PGSPGPPGPP), 598 to 618 (PGDP…PPGY), and 654 to 675 (VPGP…PPGI). A Cell attachment site motif is present at residues 791-793 (RGD). A compositionally biased stretch (pro residues) spans 900–909 (IGPPGPPGNP). The span at 974 to 987 (VPGMPGLKGLKGLP) shows a compositional bias: low complexity. The Cell attachment site signature appears at 996-998 (RGD). Composition is skewed to low complexity over residues 1013 to 1025 (IPGS…MPGS), 1094 to 1105 (LGPAGPEGAPGS), and 1118 to 1133 (HGDL…LGPP). The span at 1135 to 1148 (IRGPPGLPGFPGSP) shows a compositional bias: pro residues. A Cell attachment site motif is present at residues 1154 to 1156 (RGD). 2 stretches are compositionally biased toward low complexity: residues 1230–1250 (PGAI…RGSP) and 1290–1299 (PPGRLGAPGT). The short motif at 1306 to 1308 (RGD) is the Cell attachment site element. Positions 1332 to 1341 (PPGPIGPKGP) are enriched in pro residues. 2 consecutive short sequence motifs (cell attachment site) follow at residues 1345-1347 (RGD) and 1432-1434 (RGD). An epitope recognized by Goodpasture antibodies region spans residues 1427-1444 (GLKGKRGDSGSPATWTTR). The Collagen IV NC1 domain occupies 1445-1669 (GFVFTRHSQT…SRCQVCMKKR (225 aa)). 6 cysteine pairs are disulfide-bonded: cysteine 1460–cysteine 1551, cysteine 1493–cysteine 1548, cysteine 1505–cysteine 1511, cysteine 1570–cysteine 1665, cysteine 1604–cysteine 1662, and cysteine 1616–cysteine 1622. Residues 1479-1557 (NQRAHGQDLG…CTVCEGPAIA (79 aa)) are required for the anti-angiogenic activity of tumstatin. An S-Lysyl-methionine sulfilimine (Met-Lys) (interchain with K-1651) cross-link involves residue methionine 1533. The tract at residues 1610 to 1628 (ASPFLECHGRGTCNYYSNS) is required for the anti-tumor cell activity of tumstatin. Lysine 1651 is covalently cross-linked (S-Lysyl-methionine sulfilimine (Lys-Met) (interchain with M-1533)).

The protein belongs to the type IV collagen family. In terms of assembly, there are six type IV collagen isoforms, alpha 1(IV)-alpha 6(IV), each of which can form a triple helix structure with 2 other chains to generate type IV collagen network. The alpha 3(IV) chain forms a triple helical protomer with alpha 4(IV) and alpha 5(IV); this triple helical structure dimerizes through NC1-NC1 domain interactions such that the alpha 3(IV), alpha 4(IV) and alpha 5(IV) chains of one protomer connect with the alpha 5(IV), alpha 4(IV) and alpha 3(IV) chains of the opposite promoter, respectively. Interacts with ITGB3. Associates with LAMB2 at the neuromuscular junction and in GBM. Prolines at the third position of the tripeptide repeating unit (G-X-Y) are hydroxylated in some or all of the chains. In terms of processing, isoform 2 contains an additional N-linked glycosylation site. Post-translationally, type IV collagens contain numerous cysteine residues which are involved in inter- and intramolecular disulfide bonding. 12 of these, located in the NC1 domain, are conserved in all known type IV collagens. The trimeric structure of the NC1 domains is stabilized by covalent bonds between Lys and Met residues. In terms of processing, phosphorylated. Thought to be phosphorylated by CERT, but CERT does not have kinase activity. As to expression, alpha 3 and alpha 4 type IV collagens are colocalized and present in kidney, eye, basement membranes of lens capsule, cochlea, lung, skeletal muscle, aorta, synaptic fibers, fetal kidney and fetal lung. PubMed:8083201 reports similar levels of expression of alpha 3 and alpha 4 type IV collagens in kidney, but PubMed:7523402 reports that in kidney levels of alpha 3 type IV collagen are significantly lower than those of alpha 4 type IV collagen. According to PubMed:8083201, alpha 3 type IV collagen is not detected in heart, brain, placenta, liver, pancreas, extrasynaptic muscle fibers, endoneurial and perineurial nerves, fetal brain, fetal heart and fetal liver. According to PubMed:7523402, alpha 3 type IV collagen is strongly expressed in pancreas, neuroretina and calvaria and not expressed in adrenal, ileum and skin. Isoform 1 and isoform 3 are strongly expressed in kidney, lung, suprarenal capsule, muscle and spleen, in each of these tissues isoform 1 is more abundant than isoform 3. Isoform 1 and isoform 3 are expressed at low levels in artery, fat, pericardium and peripherical nerve, but not in placenta, mesangium, skin, pleura and cultured umbilical endothelial cells.

It localises to the secreted. The protein localises to the extracellular space. Its subcellular location is the extracellular matrix. The protein resides in the basement membrane. Functionally, type IV collagen is the major structural component of glomerular basement membranes (GBM), forming a 'chicken-wire' meshwork together with laminins, proteoglycans and entactin/nidogen. Tumstatin, a cleavage fragment corresponding to the collagen alpha 3(IV) NC1 domain, possesses both anti-angiogenic and anti-tumor cell activity; these two anti-tumor properties may be regulated via RGD-independent ITGB3-mediated mechanisms. The polypeptide is Collagen alpha-3(IV) chain (COL4A3) (Homo sapiens (Human)).